A 766-amino-acid polypeptide reads, in one-letter code: FYVE, RhoGEF and PH domain-containing protein 4 (766 aa).

Positions 1-150 (MEESNPAPTS…SSIANSHDEN (150 aa)) are actin filament-binding. Composition is skewed to polar residues over residues 47–62 (LNIP…TSSP) and 70–85 (HSPQ…TQGQ). Disordered stretches follow at residues 47–86 (LNIP…QGQH) and 143–173 (IANS…GEPG). In terms of domain architecture, DH spans 206–393 (KLHKIATELL…STAASHSNSA (188 aa)). The region spanning 422–521 (ELIKEGQILK…WIKALQESID (100 aa)) is the PH 1 domain. The FYVE-type zinc finger occupies 559–619 (DNEVTMCMKC…VCKDCYQIIS (61 aa)). Zn(2+) is bound by residues Cys-565, Cys-568, Cys-582, Cys-585, Cys-590, Cys-593, Cys-611, and Cys-614. The region spanning 643–740 (NSEVCSFLQY…WLKIILLAVT (98 aa)) is the PH 2 domain. Phosphoserine occurs at positions 702 and 716. Residues 746–766 (GPSEHLATLNNLPGPKKKSEC) are disordered.

In terms of assembly, homooligomer. As to expression, detected in thymus, lung, heart, skeletal muscle, small intestine, liver, kidney, spleen and testis. Expressed in all parts of the brain and in the spinal cord at embryonic, postnatal, and adult stages. Levels of expression are lower in postnatal and adult tissues than in embryonic tissues.

It localises to the cytoplasm. The protein localises to the cytoskeleton. Its subcellular location is the cell projection. The protein resides in the filopodium. In terms of biological role, activates CDC42, a member of the Ras-like family of Rho- and Rac proteins, by exchanging bound GDP for free GTP. Activates MAPK8. Plays a role in regulating the actin cytoskeleton and cell shape. Promotes the formation of lamellipodia. The sequence is that of FYVE, RhoGEF and PH domain-containing protein 4 (Fgd4) from Mus musculus (Mouse).